The following is a 395-amino-acid chain: Serine/threonine-protein kinase BIK1 (395 aa).

G2 is lipidated: N-myristoyl glycine. Residue C4 is the site of S-palmitoyl cysteine attachment. The residue at position 26 (S26) is a Phosphoserine. K31 participates in a covalent cross-link: Glycyl lysine isopeptide (Lys-Gly) (interchain with G-Cter in ubiquitin). S32, S33, and S34 each carry phosphoserine. Phosphothreonine is present on T35. Residue K41 forms a Glycyl lysine isopeptide (Lys-Gly) (interchain with G-Cter in ubiquitin) linkage. A Phosphothreonine modification is found at T42. Residue S48 is modified to Phosphoserine; by autocatalysis and BAK1. At T50 the chain carries Phosphothreonine. S54 bears the Phosphoserine; by autocatalysis mark. T56 is modified (phosphothreonine; by autocatalysis). At T64 the chain carries Phosphothreonine. In terms of domain architecture, Protein kinase spans 67–356 (FRPDSVIGEG…RALQQLQDNL (290 aa)). The residue at position 71 (S71) is a Phosphoserine; by autocatalysis and BAK1. 73-81 (IGEGGFGCV) lines the ATP pocket. Position 89 is a phosphoserine; by EFR (S89). Positions 89 to 90 (ST) match the Required for physical interaction with and phosphorylation of downstream signaling proteins (e.g. WRKY33, WRKY50, WRKY51 and WRKY57) to activate EFR-mediated immune signaling motif. T90 carries the post-translational modification Phosphothreonine; by EFR. K95 participates in a covalent cross-link: Glycyl lysine isopeptide (Lys-Gly) (interchain with G-Cter in ubiquitin). ATP is bound at residue K105. Position 120 is a phosphothreonine; by EFR (T120). S129 carries the phosphoserine; by autocatalysis modification. A Phosphoserine; by EFR modification is found at S129. A Phosphotyrosine modification is found at Y150. The residue at position 168 (Y168) is a Phosphotyrosine; by autocatalysis. Residues K170 and K186 each participate in a glycyl lysine isopeptide (Lys-Gly) (interchain with G-Cter in ubiquitin) cross-link. At S193 the chain carries Phosphoserine. The active-site Proton acceptor is the D202. A Phosphoserine; by autocatalysis and BAK1 modification is found at S206. Y214 bears the Phosphotyrosine; by autocatalysis mark. A Phosphoserine modification is found at S219. S233 carries the post-translational modification Phosphoserine; by autocatalysis. S236 is modified (O-UMP-serine; by Xanthomonas campestris effector XopAC/AvrAC; alternate). S236 is subject to Phosphoserine; by autocatalysis and BAK1; alternate. T237 carries the O-UMP-threonine; by Xanthomonas campestris effector XopAC/AvrAC; alternate modification. Position 237 is a phosphothreonine; by autocatalysis and BAK1; alternate (T237). The residue at position 242 (T242) is a Phosphothreonine; by autocatalysis and BAK1. A Phosphotyrosine modification is found at Y243. Y250 bears the Phosphotyrosine; by autocatalysis mark. 2 positions are modified to phosphoserine; by autocatalysis: S252 and S253. A Glycyl lysine isopeptide (Lys-Gly) (interchain with G-Cter in ubiquitin) cross-link involves residue K286. The residue at position 314 (T314) is a Phosphothreonine; by autocatalysis. K337 is covalently cross-linked (Glycyl lysine isopeptide (Lys-Gly) (interchain with G-Cter in ubiquitin)). Position 341 is a phosphothreonine (T341). Over residues 354–365 (DNLGKPSQTNPV) the composition is skewed to polar residues. The interval 354–395 (DNLGKPSQTNPVKDTKKLGFKTGTTKSSEKRFTQKPFGRHLV) is disordered. Residue K358 forms a Glycyl lysine isopeptide (Lys-Gly) (interchain with G-Cter in ubiquitin) linkage. The residue at position 360 (S360) is a Phosphoserine; by autocatalysis and BAK1. The residue at position 362 (T362) is a Phosphothreonine; by autocatalysis and BAK1. A Glycyl lysine isopeptide (Lys-Gly) (interchain with G-Cter in ubiquitin) cross-link involves residue K366. A Phosphothreonine; by autocatalysis and BAK1 modification is found at T368. 2 positions are modified to phosphothreonine: T375 and T377.

The protein belongs to the protein kinase superfamily. Ser/Thr protein kinase family. Interacts with FLS2. Activation of FLS2 by flagellin (flg22) induces the dissociation of the complex. Interacts with BAK1. Interacts with the Xanthomonas campestris effector XopAC/AvrAC. Interacts with CPK28. Interacts with PEPR1. Interacts with PP2C38. Interacts with BRI1. Interacts with RBOHD. Binds to EFR when not phosphorylated at Ser-89 and Thr-90, in the absence of pathogen elicitor; dissociates upon pathogen-associated molecular pattern (PAMP)-triggered activation by EFR-mediated phosphorylation. Interacts directly with and phosphorylates WRKY transcription factors in the nucleus involved in the jasmonic acid (JA) and salicylic acid (SA) regulation (e.g. WRKY33, WRKY50, WRKY51 and WRKY57) to modulate defense hormones during plant immunity. Binds to ATL44/RHA3A and ATL45/RHA3B. Binds to SIK1 to be phosphorylated and stabilized. Post-translationally, phosphorylated by SIK1 to be stabilized. Phosphorylated by FLS2 and BAK1. Autophosphorylated. Autophosphorylation is reduced in presence of the Xanthomonas campestris effector XopAC/AvrAC. Phosphorylated, especially by EFR at Ser-89 and Thr-90, in response to the microbe-associated molecular pattern (MAMP) flg22. Phosphorylation in response to flg22 is abolished in presence of the Xanthomonas campestris effector XopAC/AvrAC. Phosphorylated at Ser-233, Ser-236 and Thr-237 by PEPR1. Phosphorylated at Tyr-150, Tyr-243 and Tyr-250. Tyrosine phosphorylation is required for BIK1 function in plant innate immunity. In terms of processing, uridylylated at Ser-236 and Thr-237 by the Xanthomonas campestris effector XopAC/AvrAC. This conceals conserved phosphorylation sites in the activation loop, reducing BIK1 kinase activity and consequently inhibiting downstream signaling. Monoubiquitinated by ATL44/RHA3A and ATL45/RHA3B following phosphorylation upon the recognition of microbe-associated molecular patterns (MAMPs, e.g. flg22) by pattern recognition receptors (PRRs), then released from the FLS2/BAK1 complex and internalized dynamically into endocytic compartments followed by the activation of immune signaling.

The protein resides in the cell membrane. It is found in the endosome membrane. It localises to the nucleus. It carries out the reaction L-seryl-[protein] + ATP = O-phospho-L-seryl-[protein] + ADP + H(+). The catalysed reaction is L-threonyl-[protein] + ATP = O-phospho-L-threonyl-[protein] + ADP + H(+). With respect to regulation, kinase activation is repressed by the phosphatase PP2C38. Plays a central role in immune responses. Required to activate the resistance responses to necrotrophic pathogens, including the regulation of defense hormone expression (e.g. jasmonic acid (JA) and salicylic acid (SA)). Phosphorylates FLS2 and BAK1. Involved in pathogen-associated molecular pattern (PAMP)-triggered immunity (PTI) signaling, including calcium signaling, and defense responses downstream of FLS2; upon PAMP recognition, first phosphorylated by FLS2 and SIK1 prior to being monoubiquitinated by ATL44/RHA3A and ATL45/RHA3B at the plasma membrane, then internalized dynamically into endocytic compartments together with FLS2. Acts additively with PBL1 in PTI defenses. Acts as a positive regulator of the PAMP flg22-induced increase of cytosolic calcium. Upon flg22 perception, phosphorylates and activates the calcium-permeable channel OSCA1.3, promoting stomatal closure. Phosphorylates the NADPH oxidase RBOHD at specific sites in a calcium-independent manner to enhance reactive oxygen species (ROS) generation upon flg22 perception. ROS production in response to flg22 controls stomatal movement and restriction of bacterial entry into leaf tissues. Seems not required for flg22-induced MAPK activation. Required for Pep1-induced defenses. Pep1 is an endogenous elicitor that potentiates PAMP-inducible plant responses. In association with PEPR1, acts downstream of the canonical ethylene signaling cascade to regulate ethylene responses. Involved in ethylene signaling. Destabilizes EIN3, the key transcription activator in ethylene signaling, and represses EIN3-dependent transcription. Acts as a negative regulator in brassinosteroid (BR) signaling. Functions in BR signaling by direct interaction with the BR receptor BRI1 cytosolic kinase domain. Required during SCOOP small peptides (e.g. SCOOP10 and SCOOP12) perception and signaling; receptor-like cytosolic kinases (RLCK) activated by BAK1/SERK3 and SERK4 coreceptors when associated with MIK2 upon the perception of SCOOP peptides. In terms of biological role, (Microbial infection) Xanthomonas campestris effector AvrAC/XopAC-mediated uridylylation prevents activation by phosphorylation at the same residues, thus affecting immune responses and reducing defense responses toward X.campestris, mediating avrAC/XopAC virulence functions. The sequence is that of Serine/threonine-protein kinase BIK1 from Arabidopsis thaliana (Mouse-ear cress).